We begin with the raw amino-acid sequence, 356 residues long: Butyrate kinase (356 aa).

This sequence belongs to the acetokinase family.

It is found in the cytoplasm. It catalyses the reaction butanoate + ATP = butanoyl phosphate + ADP. Its pathway is lipid metabolism; butanoate metabolism. Its function is as follows. Catalyzes the conversion of butyryl-CoA through butyryl phosphate to butyrate. The sequence is that of Butyrate kinase (buk) from Clostridium perfringens (strain ATCC 13124 / DSM 756 / JCM 1290 / NCIMB 6125 / NCTC 8237 / Type A).